The following is a 419-amino-acid chain: Gamma-glutamyl phosphate reductase (419 aa).

This sequence belongs to the gamma-glutamyl phosphate reductase family.

Its subcellular location is the cytoplasm. The catalysed reaction is L-glutamate 5-semialdehyde + phosphate + NADP(+) = L-glutamyl 5-phosphate + NADPH + H(+). The protein operates within amino-acid biosynthesis; L-proline biosynthesis; L-glutamate 5-semialdehyde from L-glutamate: step 2/2. In terms of biological role, catalyzes the NADPH-dependent reduction of L-glutamate 5-phosphate into L-glutamate 5-semialdehyde and phosphate. The product spontaneously undergoes cyclization to form 1-pyrroline-5-carboxylate. The polypeptide is Gamma-glutamyl phosphate reductase (Marinomonas sp. (strain MWYL1)).